The following is a 428-amino-acid chain: Acetyltransferase sirH (428 aa).

A glycan (N-linked (GlcNAc...) asparagine) is linked at Asn8. The next 6 membrane-spanning stretches (helical) occupy residues Leu33–Leu53, Val55–Ser75, Ala78–Val98, Leu305–Ser325, Gly329–Leu349, and Phe366–Phe386.

Belongs to the wax synthase family.

Its subcellular location is the membrane. It functions in the pathway polyketide biosynthesis. Acetyltransferase; part of the gene cluster that mediates the biosynthesis of asperlin, a polyketide showing anti-inflammatory, antitumor and antibiotic activities. The first step of the asperlin biosynthesis is the production of the intermediate 2,4,6-octatrienoic acid by the highly redusing polyketide synthase alnA with cleavage of the PKS product by the esterase alnB. 2,4,6-octatrienoic acid is further converted to asperlin via several steps involving the remaining enzymes from the cluster. This is Acetyltransferase sirH from Emericella nidulans (strain FGSC A4 / ATCC 38163 / CBS 112.46 / NRRL 194 / M139) (Aspergillus nidulans).